The following is a 322-amino-acid chain: Structural glycoprotein p40 (322 aa).

Residues asparagine 130, asparagine 283, and asparagine 290 are each glycosylated (N-linked (GlcNAc...) asparagine; by host).

This sequence belongs to the baculoviridae gp41 family.

It is found in the virion. The chain is Structural glycoprotein p40 (P40) from Heliothis zea nuclear polyhedrosis virus (HzSNPV).